A 218-amino-acid polypeptide reads, in one-letter code: Pyridoxine/pyridoxamine 5'-phosphate oxidase (218 aa).

Substrate is bound by residues 14–17 and Lys72; that span reads RREY. Residues 67–72, 82–83, Arg88, Lys89, and Gln111 contribute to the FMN site; these read RIVLLK and YT. Substrate contacts are provided by Tyr129, Arg133, and Ser137. FMN is bound by residues 146-147 and Trp191; that span reads QS. Residue 197-199 participates in substrate binding; it reads RLH. Arg201 serves as a coordination point for FMN.

It belongs to the pyridoxamine 5'-phosphate oxidase family. In terms of assembly, homodimer. It depends on FMN as a cofactor.

It catalyses the reaction pyridoxamine 5'-phosphate + O2 + H2O = pyridoxal 5'-phosphate + H2O2 + NH4(+). It carries out the reaction pyridoxine 5'-phosphate + O2 = pyridoxal 5'-phosphate + H2O2. Its pathway is cofactor metabolism; pyridoxal 5'-phosphate salvage; pyridoxal 5'-phosphate from pyridoxamine 5'-phosphate: step 1/1. It functions in the pathway cofactor metabolism; pyridoxal 5'-phosphate salvage; pyridoxal 5'-phosphate from pyridoxine 5'-phosphate: step 1/1. In terms of biological role, catalyzes the oxidation of either pyridoxine 5'-phosphate (PNP) or pyridoxamine 5'-phosphate (PMP) into pyridoxal 5'-phosphate (PLP). The chain is Pyridoxine/pyridoxamine 5'-phosphate oxidase from Escherichia coli O127:H6 (strain E2348/69 / EPEC).